The primary structure comprises 79 residues: Small ribosomal subunit protein uS17 (79 aa).

The protein belongs to the universal ribosomal protein uS17 family. As to quaternary structure, part of the 30S ribosomal subunit.

Functionally, one of the primary rRNA binding proteins, it binds specifically to the 5'-end of 16S ribosomal RNA. The chain is Small ribosomal subunit protein uS17 from Rhodospirillum rubrum (strain ATCC 11170 / ATH 1.1.1 / DSM 467 / LMG 4362 / NCIMB 8255 / S1).